The chain runs to 376 residues: Aspartate-semialdehyde dehydrogenase (376 aa).

Residues 11–14 (RGMV), 38–39 (TS), and Gln-74 contribute to the NADP(+) site. Residue Arg-103 coordinates phosphate. Cys-136 functions as the Acyl-thioester intermediate in the catalytic mechanism. Residue Gln-163 participates in substrate binding. NADP(+) is bound by residues 166 to 167 (SG) and Pro-194. Glu-242 provides a ligand contact to substrate. Lys-245 contacts phosphate. Arg-273 contacts substrate. The active-site Proton acceptor is His-280. Gln-356 provides a ligand contact to NADP(+).

Belongs to the aspartate-semialdehyde dehydrogenase family. As to quaternary structure, homodimer.

It carries out the reaction L-aspartate 4-semialdehyde + phosphate + NADP(+) = 4-phospho-L-aspartate + NADPH + H(+). It functions in the pathway amino-acid biosynthesis; L-lysine biosynthesis via DAP pathway; (S)-tetrahydrodipicolinate from L-aspartate: step 2/4. Its pathway is amino-acid biosynthesis; L-methionine biosynthesis via de novo pathway; L-homoserine from L-aspartate: step 2/3. It participates in amino-acid biosynthesis; L-threonine biosynthesis; L-threonine from L-aspartate: step 2/5. Functionally, catalyzes the NADPH-dependent formation of L-aspartate-semialdehyde (L-ASA) by the reductive dephosphorylation of L-aspartyl-4-phosphate. The chain is Aspartate-semialdehyde dehydrogenase from Bordetella pertussis (strain Tohama I / ATCC BAA-589 / NCTC 13251).